We begin with the raw amino-acid sequence, 379 residues long: Anhydro-N-acetylmuramic acid kinase (379 aa).

9-16 is an ATP binding site; it reads GTSADGVD.

It belongs to the anhydro-N-acetylmuramic acid kinase family.

The enzyme catalyses 1,6-anhydro-N-acetyl-beta-muramate + ATP + H2O = N-acetyl-D-muramate 6-phosphate + ADP + H(+). Its pathway is amino-sugar metabolism; 1,6-anhydro-N-acetylmuramate degradation. It participates in cell wall biogenesis; peptidoglycan recycling. Functionally, catalyzes the specific phosphorylation of 1,6-anhydro-N-acetylmuramic acid (anhMurNAc) with the simultaneous cleavage of the 1,6-anhydro ring, generating MurNAc-6-P. Is required for the utilization of anhMurNAc either imported from the medium or derived from its own cell wall murein, and thus plays a role in cell wall recycling. In Prochlorococcus marinus (strain MIT 9211), this protein is Anhydro-N-acetylmuramic acid kinase.